Reading from the N-terminus, the 234-residue chain is Uridylate kinase (234 aa).

Residue 9-10 participates in ATP binding; it reads GS. Glycine 43 serves as a coordination point for UMP. ATP is bound by residues glycine 44 and arginine 48. Residues aspartate 65 and 113-119 contribute to the UMP site; that span reads VIPGQTT. 3 residues coordinate ATP: threonine 139, tyrosine 145, and aspartate 148.

This sequence belongs to the UMP kinase family. In terms of assembly, homohexamer.

It is found in the cytoplasm. It catalyses the reaction UMP + ATP = UDP + ADP. It functions in the pathway pyrimidine metabolism; CTP biosynthesis via de novo pathway; UDP from UMP (UMPK route): step 1/1. With respect to regulation, inhibited by UTP. In terms of biological role, catalyzes the reversible phosphorylation of UMP to UDP. This is Uridylate kinase from Methanococcoides burtonii (strain DSM 6242 / NBRC 107633 / OCM 468 / ACE-M).